The sequence spans 245 residues: 1-(5-phosphoribosyl)-5-[(5-phosphoribosylamino)methylideneamino] imidazole-4-carboxamide isomerase (245 aa).

Aspartate 7 functions as the Proton acceptor in the catalytic mechanism. Catalysis depends on aspartate 129, which acts as the Proton donor.

This sequence belongs to the HisA/HisF family.

It localises to the cytoplasm. The catalysed reaction is 1-(5-phospho-beta-D-ribosyl)-5-[(5-phospho-beta-D-ribosylamino)methylideneamino]imidazole-4-carboxamide = 5-[(5-phospho-1-deoxy-D-ribulos-1-ylimino)methylamino]-1-(5-phospho-beta-D-ribosyl)imidazole-4-carboxamide. It participates in amino-acid biosynthesis; L-histidine biosynthesis; L-histidine from 5-phospho-alpha-D-ribose 1-diphosphate: step 4/9. The polypeptide is 1-(5-phosphoribosyl)-5-[(5-phosphoribosylamino)methylideneamino] imidazole-4-carboxamide isomerase (Shewanella oneidensis (strain ATCC 700550 / JCM 31522 / CIP 106686 / LMG 19005 / NCIMB 14063 / MR-1)).